Here is a 171-residue protein sequence, read N- to C-terminus: Glutathione peroxidase-like peroxiredoxin GPX3 (171 aa).

Cysteine 43 (cysteine sulfenic acid (-SOH) intermediate) is an active-site residue. Residues cysteine 43 and cysteine 89 are joined by a disulfide bond.

The protein belongs to the glutathione peroxidase family. In terms of assembly, interacts with CAP1 and probably YBP1.

The enzyme catalyses a hydroperoxide + [thioredoxin]-dithiol = an alcohol + [thioredoxin]-disulfide + H2O. In terms of biological role, involved in oxidative stress response and redox homeostasis. Functions as a sensor and transducer of hydroperoxide stress. In response to hydroperoxide stress it oxidizes (activates) the transcription activator CAP1, which is involved in transcription activation of genes of the oxidative stress response pathway. May also play a direct role in hydroperoxide scavenging. The enzyme is not required for the glutaredoxin-mediated antioxidant function. In the presence of peroxides, GPX3 is directly oxidized at Cys-43 to form a cysteine sulfenic acid (-SOH). Cys-43-SOH then forms either an intramolecular disulfide bond (Cys-43 with Cys-89) or a transient, intermolecular disulfide bond with 'Cys-446' of CAP1, which is further resolved into a CAP1 intramolecular disulfide bond ('Cys-303' with 'Cys-598'), which causes its nuclear accumulation and activation, and a reduced Cys-43 in GPX3. Required for C.albicans-mediated macrophage killing. The protein is Glutathione peroxidase-like peroxiredoxin GPX3 of Candida albicans (strain SC5314 / ATCC MYA-2876) (Yeast).